A 520-amino-acid polypeptide reads, in one-letter code: Transcription factor MYB33 (520 aa).

Residues 1 to 24 (MSYTSTDSDHNESPAADDNGSDCR) form a disordered region. HTH myb-type domains are found at residues 29–81 (GHAL…ANHL) and 82–136 (RPNL…KRRQ). DNA-binding regions (H-T-H motif) lie at residues 57-81 (WNAVQKHTSLFRCGKSCRLRWANHL) and 109-132 (WARMAAHLPGRTDNEIKNYWNTRI). Residues 331–342 (SSSPPHSDLLDP) show a composition bias toward low complexity. Disordered stretches follow at residues 331–359 (SSSPPHSDLLDPFDTYIQSPPPPTGGEES) and 426–447 (EMSTQNADETPPRQREKKRKPL).

As to expression, mostly expressed in stems, shoot apices, flowers and floral shoot tips, and, to a lower extent, in roots (e.g. root tips), seedlings, leaves and siliques.

The protein resides in the nucleus. Functionally, transcriptional activator of alpha-amylase expression that binds to 5'-CAACTGTC-3' motif in target gene promoter. Positive regulator of abscisic acid (ABA) responses leading to growth arrest during seed germination. In vegetative tissues, inhibits growth by reducing cell proliferation. Promotes the expression of aleurone-related genes (e.g. CP1, CP, GASA1, BXL1 and BXL2) in seeds. Together with MYB65 and MYB101, promotes the programmed cell death (PCD) the vacuolation of protein storage vacuoles (PSVs) in the aleurone layers during seed germination. Binds to a GARE site (GA-response element) in the LEAFY promoter, essential for its gibberellic acid (GA)-mediated induction. Together with MYB65, facilitates anther and tapetum development. The protein is Transcription factor MYB33 of Arabidopsis thaliana (Mouse-ear cress).